The following is a 470-amino-acid chain: MSLSRRQFIQASGIALCAGAVPLKASAAGQQQPLPVPPLLESRRGQPLFMTVQRAHWSFTLGTRASVWGINGSYLGPTIRVWKGDDVKLIYSNRLTENVSMTVAGLQVPGPLMGGPARMMSPNADWAPVLPIRQNAATLWYHANTPNRTAQQVYNGLAGMWLVEDEVSKSLPIPNHYGVDDFPVIIQDKRLDNFGTPEYNEPGSGGFVGDTLLVNGVQSPYVEVSRGWVRLRLLNASNSRRYQLQMSDGRPLHVISGDQGFLPAPVSVKQLSLAPGERREILVDMSNGDEVSITCGEAASIVDRIRGFFEPSSILVSTLVLTLRPTGLLPLVTDSLPMRLLPTEIMAGSPIRSRDISLGDDPGINGQLWDVNRIDVTAQQGTWERWTVRADEPQAFHIEGVMFQIRNVNGAMPFPEDRGWKDTVWVDGQVELLVYFGQPSWAHFPFYFNSQTLEMADRGSIGQLLVNPVP.

The tat-type signal signal peptide spans 1 to 27 (MSLSRRQFIQASGIALCAGAVPLKASA). In terms of domain architecture, Plastocyanin-like spans 229–287 (VRLRLLNASNSRRYQLQMSDGRPLHVISGDQGFLPAPVSVKQLSLAPGERREILVDMSN).

Belongs to the FtsP family. Predicted to be exported by the Tat system. The position of the signal peptide cleavage has not been experimentally proven.

The protein localises to the periplasm. Cell division protein that is required for growth during stress conditions. May be involved in protecting or stabilizing the divisomal assembly under conditions of stress. The sequence is that of Cell division protein FtsP from Shigella dysenteriae serotype 1 (strain Sd197).